The following is a 464-amino-acid chain: 3-isopropylmalate dehydratase large subunit (464 aa).

Cys337, Cys397, and Cys400 together coordinate [4Fe-4S] cluster.

It belongs to the aconitase/IPM isomerase family. LeuC type 1 subfamily. In terms of assembly, heterodimer of LeuC and LeuD. Requires [4Fe-4S] cluster as cofactor.

The catalysed reaction is (2R,3S)-3-isopropylmalate = (2S)-2-isopropylmalate. It participates in amino-acid biosynthesis; L-leucine biosynthesis; L-leucine from 3-methyl-2-oxobutanoate: step 2/4. Catalyzes the isomerization between 2-isopropylmalate and 3-isopropylmalate, via the formation of 2-isopropylmaleate. In Bacillus thuringiensis (strain Al Hakam), this protein is 3-isopropylmalate dehydratase large subunit.